A 134-amino-acid chain; its full sequence is ATP synthase epsilon chain, chloroplastic (134 aa).

The protein belongs to the ATPase epsilon chain family. In terms of assembly, F-type ATPases have 2 components, CF(1) - the catalytic core - and CF(0) - the membrane proton channel. CF(1) has five subunits: alpha(3), beta(3), gamma(1), delta(1), epsilon(1). CF(0) has three main subunits: a, b and c.

The protein resides in the plastid. It is found in the chloroplast thylakoid membrane. Its function is as follows. Produces ATP from ADP in the presence of a proton gradient across the membrane. The polypeptide is ATP synthase epsilon chain, chloroplastic (Phalaenopsis aphrodite subsp. formosana (Moth orchid)).